We begin with the raw amino-acid sequence, 1480 residues long: Heme-responsive zinc finger transcription factor HAP1 (1480 aa).

Positions 1-50 (MSNTPYNSSVPSIASMTQSSVSRSPNMHTATTPGANTSSNSPPLHMSSDS) are enriched in polar residues. Residues 1–56 (MSNTPYNSSVPSIASMTQSSVSRSPNMHTATTPGANTSSNSPPLHMSSDSSKIKRK) form a disordered region. Zn(2+) is bound by residues Cys64, Cys67, Cys74, Cys81, Cys84, and Cys93. Residues 64 to 93 (CTICRKRKVKCDKLRPHCQQCTKTGVAHLC) constitute a DNA-binding region (zn(2)-C6 fungal-type). Residues 105–134 (EKELLKDNELKKLRERVKSLEKTLSKVHSS) adopt a coiled-coil conformation. Residues 126–208 (KTLSKVHSSP…ANSSSLSISN (83 aa)) form a disordered region. The segment covering 130 to 142 (KVHSSPSSNSLKS) has biased composition (low complexity). Polar residues-rich tracts occupy residues 143-152 (YNTPESSNLF) and 160-176 (TLVNANTGSASSASHMH). The span at 177-208 (QQQQQQQQQEQQQDFSRSANANANSSSLSISN) shows a compositional bias: low complexity. The interval 244–441 (KGDPYLKLLW…NTIPHHQPQS (198 aa)) is heme-responsive; required for HMC formation. HRM repeat units follow at residues 280–285 (KCPINH), 296–301 (KCPVDH), 320–325 (KCPVDH), 344–349 (RCPVDH), 386–391 (KCPVDH), and 412–417 (RCPIDH). Polar residues-rich tracts occupy residues 429–444 (STHNTIPHHQPQSGSH) and 703–731 (QLNATIPATSQDVSNNGSKKANPSTNPTL). Disordered regions lie at residues 429–456 (STHNTIPHHQPQSGSHARSHPAQSRKHD) and 703–764 (QLNA…KENQ). Low complexity predominate over residues 732–756 (NNNMSAATTNSSSRSGSADSRSGSN). The stretch at 1189-1194 (KCPVYQ) is one HRM 7 repeat. The interval 1381–1408 (TANTDTSANGSALSTLTSPQGSDLASNS) is disordered. Positions 1385 to 1408 (DTSANGSALSTLTSPQGSDLASNS) are enriched in polar residues.

As to quaternary structure, binds DNA as a homodimer. Interacts with SRO9 and YDJ1. In the absence of heme, binds to at least four cellular proteins, including YDJ1 and SRO9, forming a high-molecular-weight complex (HMC) which results in repression of its activity and dictates its DNA-binding specificity.

It is found in the nucleus. Regulation of oxygen dependent gene expression. It modulates the expression of Iso-1 (CYP1) and Iso-2 (CYP3) cytochrome c. In response to heme, promotes transcription of genes encoding functions required for respiration, controlling oxidative damage and repression of anaerobic genes. Binds to the sequence 5'-CGGNNNTNNCGG-3'. Is non-functional in terms of iso-1 cytochrome c expression in strain S288c and its derivatives. The sequence is that of Heme-responsive zinc finger transcription factor HAP1 (HAP1) from Saccharomyces cerevisiae (strain Kyokai no. 7 / NBRC 101557) (Baker's yeast).